Reading from the N-terminus, the 754-residue chain is Phosphoinositide 3-kinase regulatory subunit 6 (754 aa).

The disordered stretch occupies residues Glu-343–Arg-363.

In terms of assembly, heterodimer of a catalytic subunit (PIK3CG) and a regulatory (PIK3R6) subunit. The binding of PIK3R6 to PIK3CG may exclude the binding of PIK3R5 to PIK3CG. Interacts with beta-gamma G protein dimers. Interacts with PDE3B and RAPGEF3; form a signaling complex that regulates phosphatidylinositol 3-kinase gamma in angiogenesis.

It localises to the cytoplasm. The protein localises to the cell membrane. In terms of biological role, regulatory subunit of the PI3K gamma complex. Acts as an adapter to drive activation of PIK3CG by beta-gamma G protein dimers. The PIK3CG:PIK3R6 heterodimer is much less sensitive to beta-gamma G protein dimers than PIK3CG:PIK3R5 and its membrane recruitment and beta-gamma G protein dimer-dependent activation requires HRAS bound to PIK3CG. Recruits of the PI3K gamma complex to a PDE3B:RAPGEF3 signaling complex involved in angiogenesis; signaling seems to involve RRAS. The sequence is that of Phosphoinositide 3-kinase regulatory subunit 6 (PIK3R6) from Homo sapiens (Human).